The sequence spans 819 residues: Pentatricopeptide repeat-containing protein At5g02860 (819 aa).

A disordered region spans residues Gln57–His93. PPR repeat units follow at residues Asp172–Leu206, Asp207–Pro241, Thr242–Pro277, Asp278–Tyr312, Asp313–Pro347, Ser348–Pro382, Asp383–Pro417, Asn418–Pro452, Asp453–Pro487, Glu488–Pro522, Asp523–Pro557, Asn558–Pro592, Arg593–Pro627, Asp628–Pro662, Ser663–Pro697, Asp698–Pro732, Asp733–Pro767, and Asn768–Ala802.

This sequence belongs to the PPR family. P subfamily.

The sequence is that of Pentatricopeptide repeat-containing protein At5g02860 from Arabidopsis thaliana (Mouse-ear cress).